Here is a 332-residue protein sequence, read N- to C-terminus: D-glutamate N-acetyltransferase (332 aa).

This sequence belongs to the N-acetyltransferase DgcN family.

It catalyses the reaction D-glutamate + acetyl-CoA = N-acetyl-D-glutamate + CoA + H(+). It carries out the reaction D-aspartate + acetyl-CoA = N-acetyl-D-aspartate + CoA + H(+). The catalysed reaction is D-glutamine + acetyl-CoA = N-acetyl-D-glutamine + CoA + H(+). Its pathway is amino-acid degradation. Its function is as follows. N-acetyltransferase involved in a deamination-independent D-glutamate degradation pathway, named the DgcN-DgcA pathway. Catalyzes the transfer of the acetyl moiety from acetyl-CoA to D-glutamate to generate N-acetyl-D-glutamate. Can also acetylate D-aspartate and D-glutamine, with lower efficiency. Has low activity with D-asparagine. Cannot use succinyl-CoA. This chain is D-glutamate N-acetyltransferase, found in Pseudoalteromonas sp.